A 243-amino-acid chain; its full sequence is UPF0758 protein Tery_2667 (243 aa).

The MPN domain occupies 113–235; it reads VVESPQAAAD…HSSLRQITNL (123 aa). Zn(2+) contacts are provided by His-184, His-186, and Asp-197. The short motif at 184-197 is the JAMM motif element; it reads HNHPSGNVEPSPED.

Belongs to the UPF0758 family.

The sequence is that of UPF0758 protein Tery_2667 from Trichodesmium erythraeum (strain IMS101).